Reading from the N-terminus, the 212-residue chain is Interleukin-6 (212 aa).

The N-terminal stretch at 1–29 is a signal peptide; sequence MNSFSTSAFGPVAFSLGLLLVLPAAFPAP. 2 disulfides stabilise this stretch: Cys72–Cys78 and Cys101–Cys111. A glycan (N-linked (GlcNAc...) asparagine) is linked at Asn73. An N-linked (GlcNAc...) asparagine glycan is attached at Asn172.

This sequence belongs to the IL-6 superfamily. Component of a hexamer of two molecules each of IL6, IL6R and IL6ST; first binds to IL6R to associate with the signaling subunit IL6ST. Interacts with IL6R (via the N-terminal ectodomain); this interaction may be affected by IL6R-binding with SORL1, hence decreasing IL6 cis signaling. Interacts with SORL1 (via the N-terminal ectodomain); this interaction leads to IL6 internalization and lysosomal degradation. May form a trimeric complex with the soluble SORL1 ectodomain and soluble IL6R receptor; this interaction might stabilize circulating IL6, hence promoting IL6 trans signaling.

The protein localises to the secreted. In terms of biological role, cytokine with a wide variety of biological functions in immunity, tissue regeneration, and metabolism. Binds to IL6R, then the complex associates to the signaling subunit IL6ST/gp130 to trigger the intracellular IL6-signaling pathway. The interaction with the membrane-bound IL6R and IL6ST stimulates 'classic signaling', whereas the binding of IL6 and soluble IL6R to IL6ST stimulates 'trans-signaling'. Alternatively, 'cluster signaling' occurs when membrane-bound IL6:IL6R complexes on transmitter cells activate IL6ST receptors on neighboring receiver cells. Its function is as follows. IL6 is a potent inducer of the acute phase response. Rapid production of IL6 contributes to host defense during infection and tissue injury, but excessive IL6 synthesis is involved in disease pathology. In the innate immune response, is synthesized by myeloid cells, such as macrophages and dendritic cells, upon recognition of pathogens through toll-like receptors (TLRs) at the site of infection or tissue injury. In the adaptive immune response, is required for the differentiation of B cells into immunoglobulin-secreting cells. Plays a major role in the differentiation of CD4(+) T cell subsets. Essential factor for the development of T follicular helper (Tfh) cells that are required for the induction of germinal-center formation. Required to drive naive CD4(+) T cells to the Th17 lineage. Also required for proliferation of myeloma cells and the survival of plasmablast cells. Functionally, acts as an essential factor in bone homeostasis and on vessels directly or indirectly by induction of VEGF, resulting in increased angiogenesis activity and vascular permeability. Induces, through 'trans-signaling' and synergistically with IL1B and TNF, the production of VEGF. Involved in metabolic controls, is discharged into the bloodstream after muscle contraction increasing lipolysis and improving insulin resistance. 'Trans-signaling' in central nervous system also regulates energy and glucose homeostasis. Mediates, through GLP-1, crosstalk between insulin-sensitive tissues, intestinal L cells and pancreatic islets to adapt to changes in insulin demand. Also acts as a myokine. Plays a protective role during liver injury, being required for maintenance of tissue regeneration. Also has a pivotal role in iron metabolism by regulating HAMP/hepcidin expression upon inflammation or bacterial infection. Through activation of IL6ST-YAP-NOTCH pathway, induces inflammation-induced epithelial regeneration. This is Interleukin-6 (IL6) from Cercocebus atys (Sooty mangabey).